An 822-amino-acid chain; its full sequence is Myosin-D (822 aa).

Residues 95 to 770 (LTYGDIGGLP…AAKMLVRLQR (676 aa)) form the Myosin motor domain. 189 to 196 (GESGAGKT) contributes to the ATP binding site. The actin-binding stretch occupies residues 660 to 670 (SHFIRCIKPND). Positions 772–822 (ALSAWEPLVGVFEGMTVLKRAKQLSTGRAVPATRICANVRRKLVQAGIKVC) are tail.

This sequence belongs to the TRAFAC class myosin-kinesin ATPase superfamily. Myosin family.

It is found in the cell membrane. The protein resides in the cytoplasm. Its function is as follows. Myosins are actin-based motor molecules with ATPase activity. Unconventional myosins serve in intracellular movements. Their highly divergent tails are presumed to bind to membranous compartments, which would be moved relative to actin filaments. The protein is Myosin-D of Toxoplasma gondii.